Reading from the N-terminus, the 325-residue chain is L-lactate dehydrogenase (325 aa).

NAD(+) contacts are provided by residues Val-19, Asp-40, Lys-45, Tyr-70, and 84-85; that span reads GA. Residues Gln-87 and Arg-93 each coordinate substrate. NAD(+) is bound by residues Thr-106, 123-125, and Ser-148; that span reads AAN. 125–128 is a substrate binding site; sequence NPVD. 153–156 is a substrate binding site; sequence DSAR. Beta-D-fructose 1,6-bisphosphate-binding residues include Arg-158 and His-173. Residue His-180 is the Proton acceptor of the active site. Residue Tyr-225 is modified to Phosphotyrosine. Thr-234 provides a ligand contact to substrate.

It belongs to the LDH/MDH superfamily. LDH family. In terms of assembly, homotetramer.

The protein localises to the cytoplasm. It catalyses the reaction (S)-lactate + NAD(+) = pyruvate + NADH + H(+). Its pathway is fermentation; pyruvate fermentation to lactate; (S)-lactate from pyruvate: step 1/1. With respect to regulation, allosterically activated by fructose 1,6-bisphosphate (FBP). Catalyzes the conversion of lactate to pyruvate. The polypeptide is L-lactate dehydrogenase (Latilactobacillus sakei subsp. sakei (strain 23K) (Lactobacillus sakei subsp. sakei)).